The sequence spans 243 residues: Probable transcriptional regulatory protein TTE1135 (243 aa).

Belongs to the TACO1 family.

It is found in the cytoplasm. The chain is Probable transcriptional regulatory protein TTE1135 from Caldanaerobacter subterraneus subsp. tengcongensis (strain DSM 15242 / JCM 11007 / NBRC 100824 / MB4) (Thermoanaerobacter tengcongensis).